Reading from the N-terminus, the 63-residue chain is MNFSRILFFMFACFVALASVSAVPEPRWKVFKKIEKVGRHIRDGVIKAGPAITVVGQATALGK.

The N-terminal stretch at 1-22 (MNFSRILFFMFACFVALASVSA) is a signal peptide. Positions 23 to 26 (VPEP) are cleaved as a propeptide — removed by a dipeptidylpeptidase. Position 61 is a leucine amide (leucine 61).

Belongs to the cecropin family.

The protein resides in the secreted. Functionally, has antibacterial activity. The protein is Hyphancin-3G of Hyphantria cunea (Fall webworm moth).